The chain runs to 464 residues: Chitotriosidase-1 (464 aa).

The signal sequence occupies residues 1–21 (MVQSLAWAGVMTLLMVQWGSA). Residues 22-386 (AKLVCYLTNW…RTLRQELNLP (365 aa)) enclose the GH18 domain. Cys26 and Cys51 are disulfide-bonded. Residues 70–71 (EH) and 97–100 (GGWT) contribute to the chitin site. The Proton donor role is filled by Glu140. 210-213 (MAYD) contributes to the chitin binding site. Cys307 and Cys368 are disulfide-bonded. Positions 385–416 (LPSETPRSPEQIIPEPRPSSMPEQGPSPGLDN) are disordered. In terms of domain architecture, Chitin-binding type-2 spans 415 to 464 (DNFCQGKADGVYPNPGDESTYYNCGGGRLFQQSCPPGLVFRASCKCCTWS). Cys448 and Cys461 are oxidised to a cystine.

It belongs to the glycosyl hydrolase 18 family. Chitinase class II subfamily. In terms of assembly, monomer. As to expression, highly expressed in tongue, stomach, kidney, brain, skin, testis, and bone marrow. Low level of expression was found in lung, heart, spleen, small intestine, and liver. Not detectable in pancreas, salivary gland, large intestine, uterus, or peripheral blood mononuclear cells (PBMC).

The protein resides in the secreted. It localises to the lysosome. It carries out the reaction Random endo-hydrolysis of N-acetyl-beta-D-glucosaminide (1-&gt;4)-beta-linkages in chitin and chitodextrins.. Functionally, degrades chitin, chitotriose and chitobiose. May participate in the defense against nematodes and other pathogens. This is Chitotriosidase-1 (Chit1) from Mus musculus (Mouse).